Reading from the N-terminus, the 422-residue chain is Ribonuclease Y (422 aa).

In terms of domain architecture, KH spans 112–172 (TTNIVKLPSD…IRREIATRTL (61 aa)). In terms of domain architecture, HD spans 238–331 (VLAHSIEVAK…VAIADSISAS (94 aa)).

Belongs to the RNase Y family.

Functionally, endoribonuclease that initiates mRNA decay. The protein is Ribonuclease Y of Mycoplasma mycoides.